The chain runs to 184 residues: Large ribosomal subunit protein uL5 (184 aa).

It belongs to the universal ribosomal protein uL5 family. Part of the 50S ribosomal subunit; part of the 5S rRNA/L5/L18/L25 subcomplex. Contacts the 5S rRNA and the P site tRNA. Forms a bridge to the 30S subunit in the 70S ribosome.

In terms of biological role, this is one of the proteins that bind and probably mediate the attachment of the 5S RNA into the large ribosomal subunit, where it forms part of the central protuberance. In the 70S ribosome it contacts protein S13 of the 30S subunit (bridge B1b), connecting the 2 subunits; this bridge is implicated in subunit movement. Contacts the P site tRNA; the 5S rRNA and some of its associated proteins might help stabilize positioning of ribosome-bound tRNAs. The sequence is that of Large ribosomal subunit protein uL5 from Agrobacterium fabrum (strain C58 / ATCC 33970) (Agrobacterium tumefaciens (strain C58)).